A 940-amino-acid chain; its full sequence is Inter-alpha-trypsin inhibitor heavy chain H5 (940 aa).

Residues M1–G16 form the signal peptide. One can recognise a VIT domain in the interval V35 to E161. N-linked (GlcNAc...) asparagine glycosylation is found at N97 and N127. 2 disordered regions span residues K117–K136 and S208–V227. N231 carries an N-linked (GlcNAc...) asparagine glycan. One can recognise a VWFA domain in the interval N295–I478. Positions D405 to L432 are disordered. The segment covering W407–P417 has biased composition (basic and acidic residues). The N-linked (GlcNAc...) asparagine glycan is linked to N508. Residues P541–N571 form a disordered region. 3 N-linked (GlcNAc...) asparagine glycosylation sites follow: N774, N793, and N860.

Belongs to the ITIH family.

Its subcellular location is the secreted. In terms of biological role, may act as a tumor suppressor. In Pongo abelii (Sumatran orangutan), this protein is Inter-alpha-trypsin inhibitor heavy chain H5 (ITIH5).